Here is a 694-residue protein sequence, read N- to C-terminus: Polyphosphate kinase (694 aa).

Asn45 contributes to the ATP binding site. Residues Arg367 and Arg397 each contribute to the Mg(2+) site. The active-site Phosphohistidine intermediate is the His427. The ATP site is built by Tyr460, Arg553, and His580.

It belongs to the polyphosphate kinase 1 (PPK1) family. The cofactor is Mg(2+). An intermediate of this reaction is the autophosphorylated ppk in which a phosphate is covalently linked to a histidine residue through a N-P bond.

It carries out the reaction [phosphate](n) + ATP = [phosphate](n+1) + ADP. Catalyzes the reversible transfer of the terminal phosphate of ATP to form a long-chain polyphosphate (polyP). The chain is Polyphosphate kinase from Campylobacter coli.